Reading from the N-terminus, the 293-residue chain is MAGSLSEIKDKILSTEKTSKITSAMQMVSSAKLVKSEQAARDFQVYASKIRQITTNLLKSDLVSGSDNPMLASRPVKKTGYIVITSDKGLVGGYNSKILKAMMDTITDYHTENDDYAIISIGSVGSDFFKARGMNVSFELRGLEDQPSFDQVGKIIAQAVEMYKNELFDELYVCYNHHVNSLTSQVRMQQMLPIKELDADEASEDRVITGFELEPNREVILEQLLPQYTESLIYGAIIDAKTAEHAAGMTAMQTATDNAKNVINDLTIQYNRARQAAITQEITEIVAGANALE.

It belongs to the ATPase gamma chain family. In terms of assembly, F-type ATPases have 2 components, CF(1) - the catalytic core - and CF(0) - the membrane proton channel. CF(1) has five subunits: alpha(3), beta(3), gamma(1), delta(1), epsilon(1). CF(0) has three main subunits: a, b and c.

The protein localises to the cell membrane. Its function is as follows. Produces ATP from ADP in the presence of a proton gradient across the membrane. The gamma chain is believed to be important in regulating ATPase activity and the flow of protons through the CF(0) complex. The sequence is that of ATP synthase gamma chain from Streptococcus agalactiae serotype III (strain NEM316).